A 748-amino-acid chain; its full sequence is Rho GTPase-activating protein 24 (748 aa).

The segment at 1–20 (MEENNDSTENPQQGQGRQNA) is disordered. Positions 7 to 18 (STENPQQGQGRQ) are enriched in polar residues. The PH domain maps to 19-125 (NAIKCGWLRK…WVKSIRRVIW (107 aa)). Residues 135-329 (QKLEDTVRYE…VMISKHDCLF (195 aa)) form the Rho-GAP domain. Disordered stretches follow at residues 354-476 (TMGQ…GTHS) and 582-641 (DFFG…SSNH). Polar residues-rich tracts occupy residues 356-374 (GQLQ…SRQC) and 382-405 (PQRS…SPKN). 8 positions are modified to phosphoserine: Ser369, Ser391, Ser396, Ser398, Ser402, Ser413, Ser415, and Ser437. The segment covering 432–476 (IVTNGSFSSSNAEGLEKTQTTPNGSLQARRSSSLKVSGTKMGTHS) has biased composition (polar residues). Phosphothreonine is present on Thr452. Over residues 600–615 (DLSHPRDYESKSDHRS) the composition is skewed to basic and acidic residues. Residues 617–641 (GGRSSRATSSSDNSETFVGNSSSNH) are compositionally biased toward low complexity. A coiled-coil region spans residues 649-729 (SSLKQEMTKQ…KEMEQFFSTF (81 aa)).

Interacts with FLNA. In terms of processing, phosphorylated by ROCK, leading to activate the RacGAP activity. Isoform 1 is widely expressed with a higher level in kidney. Isoform 2 is mainly expressed in endothelial cells.

Its subcellular location is the cytoplasm. The protein localises to the cytoskeleton. It localises to the cell junction. It is found in the adherens junction. The protein resides in the focal adhesion. Its subcellular location is the cell projection. Rho GTPase-activating protein involved in cell polarity, cell morphology and cytoskeletal organization. Acts as a GTPase activator for the Rac-type GTPase by converting it to an inactive GDP-bound state. Controls actin remodeling by inactivating Rac downstream of Rho leading to suppress leading edge protrusion and promotes cell retraction to achieve cellular polarity. Able to suppress RAC1 and CDC42 activity in vitro. Overexpression induces cell rounding with partial or complete disruption of actin stress fibers and formation of membrane ruffles, lamellipodia, and filopodia. Isoform 2 is a vascular cell-specific GAP involved in modulation of angiogenesis. The chain is Rho GTPase-activating protein 24 (ARHGAP24) from Homo sapiens (Human).